We begin with the raw amino-acid sequence, 240 residues long: Sugar fermentation stimulation protein homolog (240 aa).

The protein belongs to the SfsA family.

The chain is Sugar fermentation stimulation protein homolog from Saccharolobus islandicus (strain M.14.25 / Kamchatka #1) (Sulfolobus islandicus).